The following is a 369-amino-acid chain: Anhydro-N-acetylmuramic acid kinase (369 aa).

Position 12-19 (12-19) interacts with ATP; sequence GTSMDGVD.

Belongs to the anhydro-N-acetylmuramic acid kinase family.

It catalyses the reaction 1,6-anhydro-N-acetyl-beta-muramate + ATP + H2O = N-acetyl-D-muramate 6-phosphate + ADP + H(+). It functions in the pathway amino-sugar metabolism; 1,6-anhydro-N-acetylmuramate degradation. It participates in cell wall biogenesis; peptidoglycan recycling. Catalyzes the specific phosphorylation of 1,6-anhydro-N-acetylmuramic acid (anhMurNAc) with the simultaneous cleavage of the 1,6-anhydro ring, generating MurNAc-6-P. Is required for the utilization of anhMurNAc either imported from the medium or derived from its own cell wall murein, and thus plays a role in cell wall recycling. In Shewanella sp. (strain MR-4), this protein is Anhydro-N-acetylmuramic acid kinase.